The chain runs to 199 residues: GTP cyclohydrolase-2 (199 aa).

49–53 (RIHSE) contributes to the GTP binding site. Residues C54, C65, and C67 each coordinate Zn(2+). Residues Q70, 92-94 (EGR), and T114 each bind GTP. The active-site Proton acceptor is D126. The active-site Nucleophile is the R128. Positions 149 and 154 each coordinate GTP.

It belongs to the GTP cyclohydrolase II family. In terms of assembly, homodimer. It depends on Zn(2+) as a cofactor.

The catalysed reaction is GTP + 4 H2O = 2,5-diamino-6-hydroxy-4-(5-phosphoribosylamino)-pyrimidine + formate + 2 phosphate + 3 H(+). Its pathway is cofactor biosynthesis; riboflavin biosynthesis; 5-amino-6-(D-ribitylamino)uracil from GTP: step 1/4. Catalyzes the conversion of GTP to 2,5-diamino-6-ribosylamino-4(3H)-pyrimidinone 5'-phosphate (DARP), formate and pyrophosphate. This Proteus mirabilis (strain HI4320) protein is GTP cyclohydrolase-2.